Here is an 85-residue protein sequence, read N- to C-terminus: ATP synthase subunit c (85 aa).

2 consecutive transmembrane segments (helical) span residues 10-30 (IAVG…FAIL) and 53-73 (FIIA…ALLF).

The protein belongs to the ATPase C chain family. As to quaternary structure, F-type ATPases have 2 components, F(1) - the catalytic core - and F(0) - the membrane proton channel. F(1) has five subunits: alpha(3), beta(3), gamma(1), delta(1), epsilon(1). F(0) has three main subunits: a(1), b(2) and c(10-14). The alpha and beta chains form an alternating ring which encloses part of the gamma chain. F(1) is attached to F(0) by a central stalk formed by the gamma and epsilon chains, while a peripheral stalk is formed by the delta and b chains.

It is found in the cell inner membrane. Functionally, f(1)F(0) ATP synthase produces ATP from ADP in the presence of a proton or sodium gradient. F-type ATPases consist of two structural domains, F(1) containing the extramembraneous catalytic core and F(0) containing the membrane proton channel, linked together by a central stalk and a peripheral stalk. During catalysis, ATP synthesis in the catalytic domain of F(1) is coupled via a rotary mechanism of the central stalk subunits to proton translocation. Key component of the F(0) channel; it plays a direct role in translocation across the membrane. A homomeric c-ring of between 10-14 subunits forms the central stalk rotor element with the F(1) delta and epsilon subunits. The polypeptide is ATP synthase subunit c (Aliivibrio salmonicida (strain LFI1238) (Vibrio salmonicida (strain LFI1238))).